The primary structure comprises 64 residues: MLILTRKIGESLLIGDNVEITVLSVRGNQVKLGVNAPKEVSVHREEIYQRIKALADDVASDTQQ.

It belongs to the CsrA/RsmA family. Homodimer; the beta-strands of each monomer intercalate to form a hydrophobic core, while the alpha-helices form wings that extend away from the core.

Its subcellular location is the cytoplasm. A key translational regulator that binds mRNA to regulate translation initiation and/or mRNA stability. Mediates global changes in gene expression, shifting from rapid growth to stress survival by linking envelope stress, the stringent response and the catabolite repression systems. Usually binds in the 5'-UTR; binding at or near the Shine-Dalgarno sequence prevents ribosome-binding, repressing translation, binding elsewhere in the 5'-UTR can activate translation and/or stabilize the mRNA. Its function is antagonized by small RNA(s). This Actinobacillus pleuropneumoniae serotype 5b (strain L20) protein is Translational regulator CsrA.